Here is a 211-residue protein sequence, read N- to C-terminus: Small ribosomal subunit protein uS5 (211 aa).

Residues 58–121 (FEERIVKLKR…KKAHNSIHTV (64 aa)) form the S5 DRBM domain.

Belongs to the universal ribosomal protein uS5 family. Part of the 30S ribosomal subunit. Contacts proteins S4 and S8.

Functionally, with S4 and S12 plays an important role in translational accuracy. In terms of biological role, located at the back of the 30S subunit body where it stabilizes the conformation of the head with respect to the body. The sequence is that of Small ribosomal subunit protein uS5 from Mycoplasma genitalium (strain ATCC 33530 / DSM 19775 / NCTC 10195 / G37) (Mycoplasmoides genitalium).